A 166-amino-acid chain; its full sequence is UBA-like domain-containing protein 2 (166 aa).

The segment at 120–166 (QQPVWLPPASPTTHLHHHHHHPQPVWPPNSQPTGGPQKAMAAMDGQR) is disordered.

It belongs to the UBALD family.

The chain is UBA-like domain-containing protein 2 (ubald2) from Xenopus tropicalis (Western clawed frog).